The chain runs to 312 residues: Small ribosomal subunit protein uS2 (312 aa).

The protein belongs to the universal ribosomal protein uS2 family.

The chain is Small ribosomal subunit protein uS2 from Ruthia magnifica subsp. Calyptogena magnifica.